We begin with the raw amino-acid sequence, 837 residues long: Leucine-zipper-like transcriptional regulator 1 (837 aa).

N-acetylalanine is present on A2. 6 Kelch repeats span residues 76–125, 127–182, 184–235, 236–282, 292–338, and 396–447; these read AIYV…VYGS, MFVF…VYSD, LWIF…VCRD, KMFV…QRRY, HLYV…PERA, and AMYI…FVLG. The tract at residues 324–352 is disordered; that stretch reads SSDSEVGGAEMPERASSSEDASTLTSEER. BTB domains lie at 440-534 and 664-733; these read CDVE…KYPR and CDIT…NMPP.

The protein belongs to the LZTR1 family. As to quaternary structure, homodimer. Component of the BCR(LZTR1) E3 ubiquitin ligase complex, at least composed of CUL3, LZTR1 and RBX1. Interacts with Ras (K-Ras/KRAS, N-Ras/NRAS and H-Ras/HRAS). Interacts with RAF1. Interacts with SHOC2. Interacts with PPP1CB. Post-translationally, phosphorylated on tyrosine upon induction of apoptosis, leading to its degradation by the proteasome. As to expression, widely expressed.

Its subcellular location is the endomembrane system. It is found in the recycling endosome. It localises to the golgi apparatus. It participates in protein modification; protein ubiquitination. Its function is as follows. Substrate-specific adapter of a BCR (BTB-CUL3-RBX1) E3 ubiquitin-protein ligase complex that mediates ubiquitination of Ras (K-Ras/KRAS, N-Ras/NRAS and H-Ras/HRAS). Is a negative regulator of RAS-MAPK signaling that acts by controlling Ras levels and decreasing Ras association with membranes. The sequence is that of Leucine-zipper-like transcriptional regulator 1 from Mus musculus (Mouse).